Here is a 56-residue protein sequence, read N- to C-terminus: MAKRTAVELIALQCTGCKRRNYTTSRNRRNVQEKLELRKYCPFERRRVLHREAKIK.

Belongs to the bacterial ribosomal protein bL33 family.

The chain is Large ribosomal subunit protein bL33 (rpmG) from Treponema pallidum (strain Nichols).